The chain runs to 153 residues: MDLLATTSAVAVSSYALLSTVYKTQALYARPASAAPLRDDPGQAEVALPSVDVIVPSFNEDPNTLSECLASIASQDYAGKLQVHVVDDGSANRDLVGPVHKIFANDPRFRIILLAKNVGKRKAQIAAIRSSSGDLVLNVDSDTILAADVVTKL.

Belongs to the NodC/HAS family.

The protein localises to the cell membrane. In terms of biological role, involved in the synthesis of Nod factor, a sulfated N-acyl-beta-1,4-tetrasaccharide of N-acetylglucosamine which initiates a series of events in the host plant species leading eventually to nodulation. The sequence is that of N-acetylglucosaminyltransferase (nodC) from Bradyrhizobium sp. (strain ANU 289).